The following is a 139-amino-acid chain: Nucleoside diphosphate kinase (139 aa).

Residues K10, F58, R86, T92, R103, and N113 each coordinate ATP. The Pros-phosphohistidine intermediate role is filled by H116.

The protein belongs to the NDK family. As to quaternary structure, homotetramer. The cofactor is Mg(2+).

The protein localises to the cytoplasm. The catalysed reaction is a 2'-deoxyribonucleoside 5'-diphosphate + ATP = a 2'-deoxyribonucleoside 5'-triphosphate + ADP. The enzyme catalyses a ribonucleoside 5'-diphosphate + ATP = a ribonucleoside 5'-triphosphate + ADP. In terms of biological role, major role in the synthesis of nucleoside triphosphates other than ATP. The ATP gamma phosphate is transferred to the NDP beta phosphate via a ping-pong mechanism, using a phosphorylated active-site intermediate. This Desulfovibrio desulfuricans (strain ATCC 27774 / DSM 6949 / MB) protein is Nucleoside diphosphate kinase.